A 663-amino-acid polypeptide reads, in one-letter code: UvrABC system protein B (663 aa).

The 385-residue stretch at 30 to 414 (EGIKAGKRHQ…IEHTDKMVEQ (385 aa)) folds into the Helicase ATP-binding domain. ATP is bound at residue 43–50 (GATGTGKT). The short motif at 96-119 (YYDYYQPEAYVPSTDTFIEKDASI) is the Beta-hairpin element. Residues 434–600 (QIDDLLSEIQ…TINKKIHDLI (167 aa)) enclose the Helicase C-terminal domain. The region spanning 627 to 662 (QKTIDNIEKEMKQAAKDLDFEKATELRDMLFELKAE) is the UVR domain.

Belongs to the UvrB family. As to quaternary structure, forms a heterotetramer with UvrA during the search for lesions. Interacts with UvrC in an incision complex.

It localises to the cytoplasm. The UvrABC repair system catalyzes the recognition and processing of DNA lesions. A damage recognition complex composed of 2 UvrA and 2 UvrB subunits scans DNA for abnormalities. Upon binding of the UvrA(2)B(2) complex to a putative damaged site, the DNA wraps around one UvrB monomer. DNA wrap is dependent on ATP binding by UvrB and probably causes local melting of the DNA helix, facilitating insertion of UvrB beta-hairpin between the DNA strands. Then UvrB probes one DNA strand for the presence of a lesion. If a lesion is found the UvrA subunits dissociate and the UvrB-DNA preincision complex is formed. This complex is subsequently bound by UvrC and the second UvrB is released. If no lesion is found, the DNA wraps around the other UvrB subunit that will check the other stand for damage. This Staphylococcus aureus (strain MSSA476) protein is UvrABC system protein B.